Consider the following 117-residue polypeptide: MRDWRWMLLVLALLLGWLQYRFWFGPGNSGEVMMLEAQVANQERDNEGLQQRNDALAAEVKDLKEGQSAIEERARSELGMIKPGEKFYRVVEDAPVHPAQPAAGVSAQVGDHPADVP.

Over 1 to 6 (MRDWRW) the chain is Cytoplasmic. A helical membrane pass occupies residues 7 to 24 (MLLVLALLLGWLQYRFWF). Residues 25–117 (GPGNSGEVMM…QVGDHPADVP (93 aa)) lie on the Periplasmic side of the membrane. A coiled-coil region spans residues 29–69 (SGEVMMLEAQVANQERDNEGLQQRNDALAAEVKDLKEGQSA).

Belongs to the FtsB family. As to quaternary structure, part of a complex composed of FtsB, FtsL and FtsQ.

It is found in the cell inner membrane. Functionally, essential cell division protein. May link together the upstream cell division proteins, which are predominantly cytoplasmic, with the downstream cell division proteins, which are predominantly periplasmic. The sequence is that of Cell division protein FtsB from Stenotrophomonas maltophilia (strain K279a).